The sequence spans 101 residues: Integration host factor subunit alpha (101 aa).

Belongs to the bacterial histone-like protein family. As to quaternary structure, heterodimer of an alpha and a beta chain.

Its function is as follows. This protein is one of the two subunits of integration host factor, a specific DNA-binding protein that functions in genetic recombination as well as in transcriptional and translational control. The polypeptide is Integration host factor subunit alpha (Maricaulis maris (strain MCS10) (Caulobacter maris)).